A 259-amino-acid polypeptide reads, in one-letter code: Putative zinc metalloprotease Rip2 (259 aa).

Transmembrane regions (helical) follow at residues 14–34 (PIFLGLLGLTAVGGALAWLAG) and 39–59 (PLAYAGVFVMVIAGWLVSLCL). Residue His-60 coordinates Zn(2+). Glu-61 is a catalytic residue. His-64 is a Zn(2+) binding site. A run of 4 helical transmembrane segments spans residues 97–117 (GLPMLFIALGGIGLPGAAVYV), 128–148 (TLVSLAGPTVNLALAMLLLAA), 156–176 (IHAVLWAGVAFLAFLQLTALV), and 215–235 (LVLFLAPTLNGWFFGVVYWLF).

The protein belongs to the peptidase M50B family. It depends on Zn(2+) as a cofactor.

It is found in the cell membrane. In Mycobacterium tuberculosis (strain ATCC 35801 / TMC 107 / Erdman), this protein is Putative zinc metalloprotease Rip2 (rip2).